The sequence spans 221 residues: Small ribosomal subunit protein uS5 (221 aa).

Residues 1–40 are disordered; the sequence is MMAQRNSGAPDNAGGSNDGREGGRGRRDNRDDRRGGRDNA. Basic and acidic residues predominate over residues 18–40; it reads DGREGGRGRRDNRDDRRGGRDNA. Positions 45–108 constitute an S5 DRBM domain; the sequence is YLERVVTINR…DEARKNFFRV (64 aa).

The protein belongs to the universal ribosomal protein uS5 family. As to quaternary structure, part of the 30S ribosomal subunit. Contacts proteins S4 and S8.

With S4 and S12 plays an important role in translational accuracy. Functionally, located at the back of the 30S subunit body where it stabilizes the conformation of the head with respect to the body. This chain is Small ribosomal subunit protein uS5, found in Mycobacteroides abscessus (strain ATCC 19977 / DSM 44196 / CCUG 20993 / CIP 104536 / JCM 13569 / NCTC 13031 / TMC 1543 / L948) (Mycobacterium abscessus).